The chain runs to 362 residues: N5-carboxyaminoimidazole ribonucleotide synthase (362 aa).

ATP-binding positions include arginine 85, lysine 125, glycine 130–glutamine 136, glutamate 158–isoleucine 161, glutamate 166, and asparagine 244–glutamate 245. Positions lysine 89 to leucine 274 constitute an ATP-grasp domain.

Belongs to the PurK/PurT family. As to quaternary structure, homodimer.

The enzyme catalyses 5-amino-1-(5-phospho-beta-D-ribosyl)imidazole + hydrogencarbonate + ATP = 5-carboxyamino-1-(5-phospho-D-ribosyl)imidazole + ADP + phosphate + 2 H(+). It functions in the pathway purine metabolism; IMP biosynthesis via de novo pathway; 5-amino-1-(5-phospho-D-ribosyl)imidazole-4-carboxylate from 5-amino-1-(5-phospho-D-ribosyl)imidazole (N5-CAIR route): step 1/2. Catalyzes the ATP-dependent conversion of 5-aminoimidazole ribonucleotide (AIR) and HCO(3)(-) to N5-carboxyaminoimidazole ribonucleotide (N5-CAIR). The sequence is that of N5-carboxyaminoimidazole ribonucleotide synthase from Haemophilus influenzae (strain ATCC 51907 / DSM 11121 / KW20 / Rd).